A 504-amino-acid chain; its full sequence is ATP synthase subunit alpha 2 (504 aa).

An ATP-binding site is contributed by 169 to 176; it reads GDRQTGKT.

It belongs to the ATPase alpha/beta chains family. In terms of assembly, F-type ATPases have 2 components, CF(1) - the catalytic core - and CF(0) - the membrane proton channel. CF(1) has five subunits: alpha(3), beta(3), gamma(1), delta(1), epsilon(1). CF(0) has three main subunits: a(1), b(2) and c(9-12). The alpha and beta chains form an alternating ring which encloses part of the gamma chain. CF(1) is attached to CF(0) by a central stalk formed by the gamma and epsilon chains, while a peripheral stalk is formed by the delta and b chains.

It localises to the cell membrane. It catalyses the reaction ATP + H2O + 4 H(+)(in) = ADP + phosphate + 5 H(+)(out). Functionally, produces ATP from ADP in the presence of a proton gradient across the membrane. The alpha chain is a regulatory subunit. The sequence is that of ATP synthase subunit alpha 2 from Listeria welshimeri serovar 6b (strain ATCC 35897 / DSM 20650 / CCUG 15529 / CIP 8149 / NCTC 11857 / SLCC 5334 / V8).